The sequence spans 736 residues: Acyl-coenzyme A oxidase (736 aa).

It belongs to the acyl-CoA oxidase family. FAD is required as a cofactor.

Its subcellular location is the peroxisome. It catalyses the reaction a 2,3-saturated acyl-CoA + O2 = a (2E)-enoyl-CoA + H2O2. It participates in lipid metabolism; peroxisomal fatty acid beta-oxidation. The polypeptide is Acyl-coenzyme A oxidase (POX1) (Kluyveromyces lactis (strain ATCC 8585 / CBS 2359 / DSM 70799 / NBRC 1267 / NRRL Y-1140 / WM37) (Yeast)).